The chain runs to 233 residues: Guanylate kinase (233 aa).

Positions 3 to 184 constitute a Guanylate kinase-like domain; it reads GTIFIISAPS…AVEQLRAIVL (182 aa). ATP is bound at residue 10–17; sequence APSGSGKS.

Belongs to the guanylate kinase family.

It localises to the cytoplasm. It catalyses the reaction GMP + ATP = GDP + ADP. Essential for recycling GMP and indirectly, cGMP. This chain is Guanylate kinase, found in Koribacter versatilis (strain Ellin345).